Consider the following 510-residue polypeptide: Cobyric acid synthase (510 aa).

The GATase cobBQ-type domain occupies 249 to 458 (CFKVRVLVYP…LHGLFDSPDA (210 aa)). C336 functions as the Nucleophile in the catalytic mechanism. H450 is an active-site residue.

The protein belongs to the CobB/CobQ family. CobQ subfamily.

Its pathway is cofactor biosynthesis; adenosylcobalamin biosynthesis. Functionally, catalyzes amidations at positions B, D, E, and G on adenosylcobyrinic A,C-diamide. NH(2) groups are provided by glutamine, and one molecule of ATP is hydrogenolyzed for each amidation. The protein is Cobyric acid synthase of Shewanella oneidensis (strain ATCC 700550 / JCM 31522 / CIP 106686 / LMG 19005 / NCIMB 14063 / MR-1).